A 213-amino-acid chain; its full sequence is Protein-L-isoaspartate O-methyltransferase (213 aa).

Ser-64 is an active-site residue.

This sequence belongs to the methyltransferase superfamily. L-isoaspartyl/D-aspartyl protein methyltransferase family.

The protein resides in the cytoplasm. The enzyme catalyses [protein]-L-isoaspartate + S-adenosyl-L-methionine = [protein]-L-isoaspartate alpha-methyl ester + S-adenosyl-L-homocysteine. In terms of biological role, catalyzes the methyl esterification of L-isoaspartyl residues in peptides and proteins that result from spontaneous decomposition of normal L-aspartyl and L-asparaginyl residues. It plays a role in the repair and/or degradation of damaged proteins. This chain is Protein-L-isoaspartate O-methyltransferase, found in Christiangramia forsetii (strain DSM 17595 / CGMCC 1.15422 / KT0803) (Gramella forsetii).